The primary structure comprises 709 residues: DCC-interacting protein 13-alpha (709 aa).

The segment at 1 to 428 (MPGIDKLPIE…RPPTARTSSS (428 aa)) is required for RAB5A binding. The region spanning 3-268 (GIDKLPIEET…DPLYVPDPDP (266 aa)) is the BAR domain. The stretch at 215–259 (SENLNEQLEEFLANIGTSVQNVRREMDSDIETMQQTIEDLEVASD) forms a coiled coil. Residues 277–375 (LTRKAGYLNA…WICTINNISK (99 aa)) form the PH domain. Disordered regions lie at residues 397–434 (AVTP…LGSE), 467–491 (GQAK…STKS), and 645–709 (VKEK…ESEA). The residue at position 399 (T399) is a Phosphothreonine. A Phosphoserine modification is found at S401. The F&amp;H motif lies at 403–414 (SFQQRHESLRPA). S410 is modified (phosphoserine; by PKA). Residues 496–656 (SILHQLFIVR…EKQQKELNKQ (161 aa)) form the PID domain. A coiled-coil region spans residues 621 to 673 (LAKQIALHAELDRRASEKQKEIERVKEKQQKELNKQKQIEKDLEEQSRLIAAS). The segment covering 645–667 (VKEKQQKELNKQKQIEKDLEEQS) has biased composition (basic and acidic residues). Residues 674–693 (SRPNQASSEGQFVVLSSSQS) show a composition bias toward polar residues. 2 positions are modified to phosphoserine: S693 and S696. Positions 700 to 709 (EGGKKRESEA) are enriched in basic and acidic residues.

Homodimer. Binds RAB5A/Rab5 through an N-terminal domain. This interaction is essential for its recruitment to endosomal membranes as well as its role in cell proliferation. Binds DCC and the catalytic domain of the inactive form of AKT2 through its PID domain. Binds PIK3CA and subunits of the NuRD/MeCP1 complex. Interacts with OCRL and INPP5B. Interacts with NTRK2. Interacts with APPL2; interaction is independent of follicle stimulating hormone stimulation; interaction is decreased by adiponectin in a time-dependent manner. Forms a complex with APPL2 and RUVBL2. Forms a complex comprising APPL2, RUVBL2, CTNNB1, HDAC1 and HDAC2; interaction reduces interaction between CTNNB1, HDAC1, HDAC2 and RUVBL2 leading to the decrease of deacetylase activity of this complex; affects the recruitment of repressive complexes to the Wnt target genes. Interacts with ANXA2. Interacts with TGFBR1; interaction is TGF beta dependent; mediates trafficking of the TGFBR1 from the endosomes to the nucleus via microtubules in a TRAF6-dependent manner. Interacts with PRKCZ. Interacts with PIK3R1 and APPL2. Interacts with ADIPOR1; ADIPOQ enhances this interaction; inhibites adiponectin-stimulated binding of APPL2 to ADIPOR1. Phosphorylation at Ser-410 by PKA severely impairs binding to OCRL. High levels in heart, ovary, pancreas and skeletal muscle.

It localises to the early endosome membrane. The protein localises to the nucleus. The protein resides in the cytoplasm. It is found in the endosome. Its subcellular location is the cell projection. It localises to the ruffle. The protein localises to the cytoplasmic vesicle. The protein resides in the phagosome. Multifunctional adapter protein that binds to various membrane receptors, nuclear factors and signaling proteins to regulate many processes, such as cell proliferation, immune response, endosomal trafficking and cell metabolism. Regulates signaling pathway leading to cell proliferation through interaction with RAB5A and subunits of the NuRD/MeCP1 complex. Functions as a positive regulator of innate immune response via activation of AKT1 signaling pathway by forming a complex with APPL1 and PIK3R1. Inhibits Fc-gamma receptor-mediated phagocytosis through PI3K/Akt signaling in macrophages. Regulates TLR4 signaling in activated macrophages. Involved in trafficking of the TGFBR1 from the endosomes to the nucleus via microtubules in a TRAF6-dependent manner. Plays a role in cell metabolism by regulating adiponecting and insulin signaling pathways. Required for fibroblast migration through HGF cell signaling. Positive regulator of beta-catenin/TCF-dependent transcription through direct interaction with RUVBL2/reptin resulting in the relief of RUVBL2-mediated repression of beta-catenin/TCF target genes by modulating the interactions within the beta-catenin-reptin-HDAC complex. This is DCC-interacting protein 13-alpha from Homo sapiens (Human).